The sequence spans 84 residues: CDC42 small effector protein 2 (84 aa).

2 S-palmitoyl cysteine lipidation sites follow: C10 and C11. In terms of domain architecture, CRIB spans 29-42 (IGEPTNFVHTAHVG). Residues S43 and S52 each carry the phosphoserine modification.

The protein belongs to the CDC42SE/SPEC family. In terms of assembly, interacts with CDC42 (in GTP-bound form). Interacts weakly with RAC1 and not at all with RHOA.

It localises to the cytoplasm. It is found in the cytoskeleton. The protein localises to the cell membrane. Its subcellular location is the cell projection. The protein resides in the phagocytic cup. Probably involved in the organization of the actin cytoskeleton by acting downstream of CDC42, inducing actin filament assembly. Alters CDC42-induced cell shape changes. In activated T-cells, may play a role in CDC42-mediated F-actin accumulation at the immunological synapse. May play a role in early contractile events in phagocytosis in macrophages. This is CDC42 small effector protein 2 (CDC42SE2) from Bos taurus (Bovine).